We begin with the raw amino-acid sequence, 382 residues long: Anthranilate O-methyltransferase 1 (382 aa).

Tyr20 is an S-adenosyl-L-homocysteine binding site. Gln27 provides a ligand contact to anthranilate. Residues Cys61, Asn66, Asp102, Leu103, Ser146, and Tyr147 each coordinate S-adenosyl-L-homocysteine. Trp168 serves as a coordination point for anthranilate. Residues Glu268 and Phe270 each contribute to the Mg(2+) site.

The protein belongs to the methyltransferase superfamily. Type-7 methyltransferase family. SABATH subfamily.

It catalyses the reaction anthranilate + S-adenosyl-L-methionine = O-methyl anthranilate + S-adenosyl-L-homocysteine. Its function is as follows. Methyltransferase involved in the biosynthesis of methyl anthranilate in response to stresses. Utilizes anthranilic acid as substrate, but not salicylic acid. Produces exclusively the O-methyl ester. This Zea mays (Maize) protein is Anthranilate O-methyltransferase 1 (AAMT1).